The primary structure comprises 332 residues: 4-hydroxy-3-methylbut-2-enyl diphosphate reductase (332 aa).

A [4Fe-4S] cluster-binding site is contributed by cysteine 34. Positions 63 and 96 each coordinate (2E)-4-hydroxy-3-methylbut-2-enyl diphosphate. Dimethylallyl diphosphate-binding residues include histidine 63 and histidine 96. Isopentenyl diphosphate contacts are provided by histidine 63 and histidine 96. Position 118 (cysteine 118) interacts with [4Fe-4S] cluster. Histidine 146 is a binding site for (2E)-4-hydroxy-3-methylbut-2-enyl diphosphate. Histidine 146 serves as a coordination point for dimethylallyl diphosphate. Histidine 146 serves as a coordination point for isopentenyl diphosphate. Residue glutamate 148 is the Proton donor of the active site. Threonine 186 is a binding site for (2E)-4-hydroxy-3-methylbut-2-enyl diphosphate. Cysteine 216 contacts [4Fe-4S] cluster. (2E)-4-hydroxy-3-methylbut-2-enyl diphosphate is bound by residues serine 244, serine 245, asparagine 246, and serine 289. Dimethylallyl diphosphate contacts are provided by serine 244, serine 245, asparagine 246, and serine 289. Isopentenyl diphosphate is bound by residues serine 244, serine 245, asparagine 246, and serine 289.

Belongs to the IspH family. Requires [4Fe-4S] cluster as cofactor.

It catalyses the reaction isopentenyl diphosphate + 2 oxidized [2Fe-2S]-[ferredoxin] + H2O = (2E)-4-hydroxy-3-methylbut-2-enyl diphosphate + 2 reduced [2Fe-2S]-[ferredoxin] + 2 H(+). The catalysed reaction is dimethylallyl diphosphate + 2 oxidized [2Fe-2S]-[ferredoxin] + H2O = (2E)-4-hydroxy-3-methylbut-2-enyl diphosphate + 2 reduced [2Fe-2S]-[ferredoxin] + 2 H(+). The protein operates within isoprenoid biosynthesis; dimethylallyl diphosphate biosynthesis; dimethylallyl diphosphate from (2E)-4-hydroxy-3-methylbutenyl diphosphate: step 1/1. It participates in isoprenoid biosynthesis; isopentenyl diphosphate biosynthesis via DXP pathway; isopentenyl diphosphate from 1-deoxy-D-xylulose 5-phosphate: step 6/6. Catalyzes the conversion of 1-hydroxy-2-methyl-2-(E)-butenyl 4-diphosphate (HMBPP) into a mixture of isopentenyl diphosphate (IPP) and dimethylallyl diphosphate (DMAPP). Acts in the terminal step of the DOXP/MEP pathway for isoprenoid precursor biosynthesis. This chain is 4-hydroxy-3-methylbut-2-enyl diphosphate reductase, found in Mycobacterium ulcerans (strain Agy99).